We begin with the raw amino-acid sequence, 334 residues long: CRISPR-associated protein Cas1 3 (334 aa).

Residues Glu165, His230, and Glu245 each contribute to the Mn(2+) site.

It belongs to the CRISPR-associated endonuclease Cas1 family. As to quaternary structure, homodimer, forms a heterotetramer with a Cas2 homodimer. Mg(2+) serves as cofactor. It depends on Mn(2+) as a cofactor.

CRISPR (clustered regularly interspaced short palindromic repeat), is an adaptive immune system that provides protection against mobile genetic elements (viruses, transposable elements and conjugative plasmids). CRISPR clusters contain spacers, sequences complementary to antecedent mobile elements, and target invading nucleic acids. CRISPR clusters are transcribed and processed into CRISPR RNA (crRNA). Acts as a dsDNA endonuclease. Involved in the integration of spacer DNA into the CRISPR cassette. In Methanobrevibacter ruminantium (strain ATCC 35063 / DSM 1093 / JCM 13430 / OCM 146 / M1) (Methanobacterium ruminantium), this protein is CRISPR-associated protein Cas1 3.